Here is a 155-residue protein sequence, read N- to C-terminus: SsrA-binding protein (155 aa).

The interval 135-155 (KRQDIKQRDVERETRREIMRH) is disordered.

The protein belongs to the SmpB family.

Its subcellular location is the cytoplasm. In terms of biological role, required for rescue of stalled ribosomes mediated by trans-translation. Binds to transfer-messenger RNA (tmRNA), required for stable association of tmRNA with ribosomes. tmRNA and SmpB together mimic tRNA shape, replacing the anticodon stem-loop with SmpB. tmRNA is encoded by the ssrA gene; the 2 termini fold to resemble tRNA(Ala) and it encodes a 'tag peptide', a short internal open reading frame. During trans-translation Ala-aminoacylated tmRNA acts like a tRNA, entering the A-site of stalled ribosomes, displacing the stalled mRNA. The ribosome then switches to translate the ORF on the tmRNA; the nascent peptide is terminated with the 'tag peptide' encoded by the tmRNA and targeted for degradation. The ribosome is freed to recommence translation, which seems to be the essential function of trans-translation. The sequence is that of SsrA-binding protein from Oleidesulfovibrio alaskensis (strain ATCC BAA-1058 / DSM 17464 / G20) (Desulfovibrio alaskensis).